We begin with the raw amino-acid sequence, 299 residues long: Methylsterol monooxygenase 1-2 (299 aa).

The next 3 helical transmembrane spans lie at 39-59 (CHNI…LVFI), 96-116 (FILV…MIEI), and 118-138 (SGLP…YFLV). A Fatty acid hydroxylase domain is found at 132 to 267 (LVVYFLVEDY…FTYCDYIYGT (136 aa)). The Histidine box-1 motif lies at 147-151 (HRFFH). Positions 160–164 (HHIHH) match the Histidine box-2 motif. Residues 189–209 (TFLGPAIAPGHMITFWLWIAL) traverse the membrane as a helical segment. Positions 239 to 245 (YHDYHHY) match the Histidine box-3 motif.

This sequence belongs to the sterol desaturase family. Interacts with ACBP1. It depends on Fe cation as a cofactor. In terms of tissue distribution, expressed in embryo sacs, pollen and trichomes. Observed in leaves, roots, siliques and flowers.

Its subcellular location is the endoplasmic reticulum membrane. It carries out the reaction 4,4-dimethyl-5alpha-cholest-7-en-3beta-ol + 6 Fe(II)-[cytochrome b5] + 3 O2 + 5 H(+) = 4alpha-carboxy-4beta-methyl-5alpha-cholest-7-ene-3beta-ol + 6 Fe(III)-[cytochrome b5] + 4 H2O. The catalysed reaction is 24-methylenecycloartanol + 6 Fe(II)-[cytochrome b5] + 3 O2 + 5 H(+) = 4alpha-carboxy-4beta,14alpha-dimethyl-9beta,19-cyclo-5alpha-ergost-24(24(1))-en-3beta-ol + 6 Fe(III)-[cytochrome b5] + 4 H2O. Non-heme iron oxygenase involved in sterols biosynthesis by catalyzing the removal of the first methyl group at the C-4 position. 4,4-dimethyl-9-beta,19-cyclopropylsterols such as 24-methylenecycloartanol are the preferred substrates. Acts as a rate-limiting enzyme in the sterol pathway via interaction with ACBP1; sterols serve as lipid modulators for gene expression of homeodomain-leucine zipper IV transcription factors. Together with SMO1-1, involved in the maintenance of sterol composition to balance auxin and cytokinin activities during embryogenesis. This Arabidopsis thaliana (Mouse-ear cress) protein is Methylsterol monooxygenase 1-2.